Consider the following 181-residue polypeptide: Probable RNA 2'-phosphotransferase (181 aa).

It belongs to the KptA/TPT1 family.

In terms of biological role, removes the 2'-phosphate from RNA via an intermediate in which the phosphate is ADP-ribosylated by NAD followed by a presumed transesterification to release the RNA and generate ADP-ribose 1''-2''-cyclic phosphate (APPR&gt;P). May function as an ADP-ribosylase. The protein is Probable RNA 2'-phosphotransferase of Acaryochloris marina (strain MBIC 11017).